Reading from the N-terminus, the 210-residue chain is 3,4-dihydroxy-2-butanone 4-phosphate synthase (210 aa).

D-ribulose 5-phosphate contacts are provided by residues 33 to 34 (RE), D38, 146 to 150 (RRGHT), and E170. E34 serves as a coordination point for Mg(2+). H149 serves as a coordination point for Mg(2+).

This sequence belongs to the DHBP synthase family. Homodimer. Mg(2+) serves as cofactor. The cofactor is Mn(2+).

The enzyme catalyses D-ribulose 5-phosphate = (2S)-2-hydroxy-3-oxobutyl phosphate + formate + H(+). The protein operates within cofactor biosynthesis; riboflavin biosynthesis; 2-hydroxy-3-oxobutyl phosphate from D-ribulose 5-phosphate: step 1/1. Functionally, catalyzes the conversion of D-ribulose 5-phosphate to formate and 3,4-dihydroxy-2-butanone 4-phosphate. In Chromobacterium violaceum (strain ATCC 12472 / DSM 30191 / JCM 1249 / CCUG 213 / NBRC 12614 / NCIMB 9131 / NCTC 9757 / MK), this protein is 3,4-dihydroxy-2-butanone 4-phosphate synthase.